Consider the following 146-residue polypeptide: Globin-1 (146 aa).

The region spanning 9-146 is the Globin domain; that stretch reads QLTADVKKDL…KLVAVVQAAL (138 aa). Histidine 101 provides a ligand contact to heme b.

The protein belongs to the globin family. Homodimer.

It localises to the cytoplasm. The chain is Globin-1 from Anadara inaequivalvis (Inequivalve ark).